The chain runs to 267 residues: MRRIAVMGAAGRMGKTLIEAVQQTPGAGLTAAIDRPDSSLVGADAGELAALGRIGVLLSDDLAKVADEFDVLIDFTHPSVTLKNLAFCRKHGKAMIIGTTGFSVEEKQLLAEAGKDIPIVFAANFSVGVNLSLKLLDMAARVLGDDVDIEIIEAHHRHKVDAPSGTALRMGEVVANALGRNLQEVAVYGREGQTGARDRKTIGFATVRAGDVVGDHTVLFAAEGERLEITHKASSRMTFAKGAVRAALWLDGREPALYDMQDVLELR.

NAD(+) is bound by residues Gly-8–Met-13 and Asp-34. Residue Arg-35 coordinates NADP(+). Residues Gly-98–Thr-100 and Ala-122–Phe-125 each bind NAD(+). The active-site Proton donor/acceptor is the His-155. (S)-2,3,4,5-tetrahydrodipicolinate is bound at residue His-156. Catalysis depends on Lys-159, which acts as the Proton donor. Gly-165–Thr-166 provides a ligand contact to (S)-2,3,4,5-tetrahydrodipicolinate.

It belongs to the DapB family.

Its subcellular location is the cytoplasm. It catalyses the reaction (S)-2,3,4,5-tetrahydrodipicolinate + NAD(+) + H2O = (2S,4S)-4-hydroxy-2,3,4,5-tetrahydrodipicolinate + NADH + H(+). The catalysed reaction is (S)-2,3,4,5-tetrahydrodipicolinate + NADP(+) + H2O = (2S,4S)-4-hydroxy-2,3,4,5-tetrahydrodipicolinate + NADPH + H(+). The protein operates within amino-acid biosynthesis; L-lysine biosynthesis via DAP pathway; (S)-tetrahydrodipicolinate from L-aspartate: step 4/4. Its function is as follows. Catalyzes the conversion of 4-hydroxy-tetrahydrodipicolinate (HTPA) to tetrahydrodipicolinate. This Pseudomonas putida (strain GB-1) protein is 4-hydroxy-tetrahydrodipicolinate reductase.